A 200-amino-acid polypeptide reads, in one-letter code: Ribonuclease HII (200 aa).

The RNase H type-2 domain occupies 14–200 (SRLAGVDEVG…FAPVKQWQLL (187 aa)). A divalent metal cation is bound by residues Asp20, Glu21, and Asp112.

Belongs to the RNase HII family. Mn(2+) is required as a cofactor. The cofactor is Mg(2+).

Its subcellular location is the cytoplasm. The enzyme catalyses Endonucleolytic cleavage to 5'-phosphomonoester.. Functionally, endonuclease that specifically degrades the RNA of RNA-DNA hybrids. In Chromohalobacter salexigens (strain ATCC BAA-138 / DSM 3043 / CIP 106854 / NCIMB 13768 / 1H11), this protein is Ribonuclease HII.